We begin with the raw amino-acid sequence, 293 residues long: MPWIQLKLNTTGANAEDLSDALMEAGAVSITFQDTHDTPVFEPLPGETRLWGDTDVIGLFDAETDMNDVVAILENHPLLGAGFAHKIEQLEDKDWEREWMDNFHPMRFGERLWICPSWRDVPDENAVNVMLDPGLAFGTGTHPTTSLCLQWLDSLDLTGKIVIDFGCGSGILAIAALKLGAAKAIGIDIDPQAIQASRDNAERNGVSDRLELYLPKDQPEEMKADVVVANILAGPLRELAPLISVLPVSGGLLGLSGILASQAESVCEAYVDSFALDPVVEKEEWCRITGRKN.

S-adenosyl-L-methionine contacts are provided by T145, G166, D188, and N230.

This sequence belongs to the methyltransferase superfamily. PrmA family.

The protein resides in the cytoplasm. It carries out the reaction L-lysyl-[protein] + 3 S-adenosyl-L-methionine = N(6),N(6),N(6)-trimethyl-L-lysyl-[protein] + 3 S-adenosyl-L-homocysteine + 3 H(+). Methylates ribosomal protein L11. The sequence is that of Ribosomal protein L11 methyltransferase from Shigella sonnei (strain Ss046).